Here is a 678-residue protein sequence, read N- to C-terminus: RxLR effector protein PITG_16705 (678 aa).

Residues methionine 1–alanine 20 form the signal peptide. The short motif at arginine 46 to arginine 61 is the RxLR-dEER element.

It belongs to the RxLR effector family.

The protein localises to the secreted. It is found in the host cytoplasm. Functionally, effector that enhances P.infestans colonization of Nicotiana benthamiana leaves. This Phytophthora infestans (strain T30-4) (Potato late blight agent) protein is RxLR effector protein PITG_16705.